A 436-amino-acid chain; its full sequence is Protein PhoH2 (436 aa).

The PINc domain maps to 12–137; sequence RTYVLDTSVL…LVSKDLPMRL (126 aa).

In the N-terminal section; belongs to the PINc/VapC protein family. It in the C-terminal section; belongs to the PhoH family.

The enzyme catalyses n ATP + n H2O + wound RNA = n ADP + n phosphate + unwound RNA.. The catalysed reaction is ATP + H2O = ADP + phosphate + H(+). It carries out the reaction GTP + H2O = GDP + phosphate + H(+). Its function is as follows. Unwinds and/or cleaves 5'-tailed RNA in vitro, the reaction is maximal with hydrolyzable ATP; double-stranded (ds)RNA and dsDNA are not unwound. Unlike the protein in mycobacteria there does not seem to be an antitoxin gene upstream, suggesting this is not a toxin-antitoxin system. Has ATPase and GTPase activities. In Thermobispora bispora (strain ATCC 19993 / DSM 43833 / CBS 139.67 / JCM 10125 / KCTC 9307 / NBRC 14880 / R51), this protein is Protein PhoH2.